We begin with the raw amino-acid sequence, 370 residues long: E3 ubiquitin-protein ligase E3D (370 aa).

Position 2 is an N-acetylalanine (alanine 2). Residues proline 129 to asparagine 159 carry the BRAT1-like motif motif. Residue cysteine 144 coordinates Zn(2+). The tract at residues glutamine 214 to cysteine 236 is interaction with UBE2C. Positions leucine 332–cysteine 368 are HECT-like.

Interacts with UBE2C/UbcH10 (E2 ubiquitin-conjugating enzyme). In vitro, interacts with cyclin-B. Ubiquitinated by UBCH10 (E2 ubiquitin-conjugating enzyme).

Its subcellular location is the cytoplasm. The enzyme catalyses S-ubiquitinyl-[E2 ubiquitin-conjugating enzyme]-L-cysteine + [acceptor protein]-L-lysine = [E2 ubiquitin-conjugating enzyme]-L-cysteine + N(6)-ubiquitinyl-[acceptor protein]-L-lysine.. It functions in the pathway protein modification; protein ubiquitination. Functionally, E3 ubiquitin-protein ligase which accepts ubiquitin from specific E2 ubiquitin-conjugating enzymes, and transfers it to substrates, generally promoting their degradation by the proteasome. Independently of its E3 ubiquitin-protein ligase activity, acts as an inhibitor of CPSF3 endonuclease activity by blocking CPSF3 active site. The polypeptide is E3 ubiquitin-protein ligase E3D (Ube3d) (Rattus norvegicus (Rat)).